The primary structure comprises 102 residues: RNA-binding protein Hfq (102 aa).

Positions 9-68 (DPFLNALRRERVPVSIYLVNGIKLQGQIESFDQFVILLKNTVSQMVYKHAISTVVPSRPV) constitute a Sm domain. A disordered region spans residues 63–102 (VPSRPVSHHSNNTGGGSNNYHHGSSPAPSSQPQQDSADAE). Residues 70 to 102 (HHSNNTGGGSNNYHHGSSPAPSSQPQQDSADAE) are compositionally biased toward low complexity.

The protein belongs to the Hfq family. As to quaternary structure, homohexamer.

In terms of biological role, RNA chaperone that binds small regulatory RNA (sRNAs) and mRNAs to facilitate mRNA translational regulation in response to envelope stress, environmental stress and changes in metabolite concentrations. Also binds with high specificity to tRNAs. The chain is RNA-binding protein Hfq from Erwinia tasmaniensis (strain DSM 17950 / CFBP 7177 / CIP 109463 / NCPPB 4357 / Et1/99).